A 236-amino-acid chain; its full sequence is Acetate--CoA ligase [ADP-forming] II subunit beta (236 aa).

The region spanning 26 to 62 is the ATP-grasp domain; that stretch reads KQVLKAYGLPVPEEKLAKTLDEALKYAEEIGYPVAMK. 52-63 lines the ATP pocket; the sequence is AEEIGYPVAMKL.

The protein belongs to the acetate CoA ligase beta subunit family. Heterotetramer of two alpha and two beta subunits.

It catalyses the reaction acetate + ATP + CoA = acetyl-CoA + ADP + phosphate. Its function is as follows. Catalyzes the reversible formation of acetate and ATP from acetyl-CoA by using ADP and phosphate. Can use other substrates such as phenylacetyl-CoA, indoleacetyl-CoA and isobutyryl-CoA, but not succinyl-CoA. Seems to be involved primarily in the degradation of aryl-CoA esters to the corresponding acids. Participates in the conversion of acetyl-CoA to acetate and in the degradation of branched-chain amino acids via branched-chain-acyl-CoA esters. The sequence is that of Acetate--CoA ligase [ADP-forming] II subunit beta from Pyrococcus furiosus (strain ATCC 43587 / DSM 3638 / JCM 8422 / Vc1).